A 443-amino-acid polypeptide reads, in one-letter code: MARAAWGLLWLLLGSAGAQYEKYSFRGFPPEDLMPLATAYGHALEQYEGESWRESARYLEAALRLHRLLRDSEAFCHANCSGPATSQPRPAPGPDGDNEGDGEDWARELRLFGHVLERAACLRRCKRTLPAFQVPYPSRQLLRDFQNRLPYQYLHYAHFKANRLEKAVAAAYTFLQRNPKHELTAKYLNYYRGMLDIGDESLTDLEAQPYEAVFLQAVKLYNSGDFRSSTEHMERALADYMTVFARCLAGCEGAHEQVDFKDFYPAIADLFAESLQCKVDCEANLTPNVGGFFVDKFVATMYHYLQFAYYKLNDVHQAARSAASYMLFDPKDSVMQQNLVYYRFHRARWGLEEEDFQPREEAVLYHNQTSELRELLDFTHMYLQSDDEMELEETESLPEPEKPLSDAEFEGEGDYEEGLYADWWQEPDAKGDEDEAEPEPELA.

The N-terminal stretch at 1 to 18 (MARAAWGLLWLLLGSAGA) is a signal peptide. The disordered stretch occupies residues 81–102 (SGPATSQPRPAPGPDGDNEGDG). An N-linked (GlcNAc...) asparagine glycan is attached at asparagine 367. Composition is skewed to acidic residues over residues 387–398 (DEMELEETESLP), 407–419 (AEFE…EEGL), and 431–443 (GDED…PELA). The tract at residues 387–443 (DEMELEETESLPEPEKPLSDAEFEGEGDYEEGLYADWWQEPDAKGDEDEAEPEPELA) is disordered.

Belongs to the leprecan family. Interacts with PLOD1, P3H3 and PPIB. Identified in a complex with PLOD1 and P3H3. In terms of tissue distribution, found in testis, brain, heart and at a much lower level in liver.

The protein resides in the endoplasmic reticulum. Its function is as follows. Part of a complex composed of PLOD1, P3H3 and P3H4 that catalyzes hydroxylation of lysine residues in collagen alpha chains and is required for normal assembly and cross-linking of collagen fibrils. Required for normal bone density and normal skin stability via its role in hydroxylation of lysine residues in collagen alpha chains and in collagen fibril assembly. This chain is Endoplasmic reticulum protein SC65, found in Rattus norvegicus (Rat).